Consider the following 20-residue polypeptide: Toxin CpTx-4a (20 aa).

This sequence belongs to the spider toxin CSTX family. In terms of tissue distribution, expressed by the venom gland.

The protein resides in the secreted. Functionally, spider venom toxin that exhibits cytolytic activity by forming an alpha-helix across the membrane. Lethal to insect larvae. This is Toxin CpTx-4a from Cheiracanthium punctorium (Yellow sac spider).